We begin with the raw amino-acid sequence, 112 residues long: Large ribosomal subunit protein bL17 (112 aa).

It belongs to the bacterial ribosomal protein bL17 family. Part of the 50S ribosomal subunit. Contacts protein L32.

The protein is Large ribosomal subunit protein bL17 of Desulfitobacterium hafniense (strain DSM 10664 / DCB-2).